The chain runs to 1145 residues: Probable ATP-dependent RNA helicase DHX34 (1145 aa).

Over residues 1-14 (MPPPRTREGRGHRD) the composition is skewed to basic and acidic residues. Residues 1 to 27 (MPPPRTREGRGHRDRDHHRAPREEEAP) are disordered. Residues 174-334 (LQTLKEHQVV…FSHAPVVQVP (161 aa)) enclose the Helicase ATP-binding domain. 187-194 (GDTGCGKS) is an ATP binding site. Residues 281–284 (DEVH) carry the DEAH box motif. The Helicase C-terminal domain maps to 370 to 538 (AIDNKYPPEE…ALVLQMKSMS (169 aa)). Disordered regions lie at residues 726–764 (LKRQ…QRAD) and 1091–1114 (NTCP…PQKT). 2 positions are modified to phosphoserine: serine 749 and serine 750.

This sequence belongs to the DEAD box helicase family. DEAH subfamily. In terms of assembly, forms a complex with RUVBL1 and RUVBL2. Part of a complex composed of SMG1, DHX34 and UPF1; within the complex DHX34 acts as a scaffolding protein to facilitate SMG1 phosphorylation of UPF1. Interacts with UPF1, MOV10, EIF4A3, XRN2, SMG6, SMG7, SMG9, UPF3A, UPF3B, CASC3/MLN51, XRN1, DIS3 and DCP1A; the interactions are RNA-independent. Interacts with NCBP1/CPB80; the interaction is RNA-dependent. Interacts (via C-terminus) with SMG1; the interaction is RNA-independent.

The enzyme catalyses ATP + H2O = ADP + phosphate + H(+). Probable ATP-binding RNA helicase. Required for nonsense-mediated decay (NMD) degradation of mRNA transcripts containing premature stop codons. Promotes the phosphorylation of UPF1 along with its interaction with key NMD pathway proteins UPF2 and EIF4A3. Negatively regulates the nucleotide binding ability and ATP hydrolysis of the RUVBL1-RUVBL2 complex via induction of N-terminus conformation changes of the RUVBL2 subunits. The polypeptide is Probable ATP-dependent RNA helicase DHX34 (Mus musculus (Mouse)).